A 375-amino-acid polypeptide reads, in one-letter code: Carbamoyl phosphate synthase small chain (375 aa).

A CPSase region spans residues 1-184 (MVSLYLENGL…LDYKPFDEKI (184 aa)). L-glutamine contacts are provided by Ser-44, Gly-240, and Gly-242. Residues 188 to 375 (IIAVLDFGAK…KEFVGLLEGF (188 aa)) form the Glutamine amidotransferase type-1 domain. Cys-268 serves as the catalytic Nucleophile. L-glutamine contacts are provided by Leu-269, Gln-272, Asn-310, and Tyr-313. Residues His-351 and Glu-353 contribute to the active site.

It belongs to the CarA family. As to quaternary structure, composed of two chains; the small (or glutamine) chain promotes the hydrolysis of glutamine to ammonia, which is used by the large (or ammonia) chain to synthesize carbamoyl phosphate. Tetramer of heterodimers (alpha,beta)4.

The catalysed reaction is hydrogencarbonate + L-glutamine + 2 ATP + H2O = carbamoyl phosphate + L-glutamate + 2 ADP + phosphate + 2 H(+). The enzyme catalyses L-glutamine + H2O = L-glutamate + NH4(+). It participates in amino-acid biosynthesis; L-arginine biosynthesis; carbamoyl phosphate from bicarbonate: step 1/1. It functions in the pathway pyrimidine metabolism; UMP biosynthesis via de novo pathway; (S)-dihydroorotate from bicarbonate: step 1/3. Small subunit of the glutamine-dependent carbamoyl phosphate synthetase (CPSase). CPSase catalyzes the formation of carbamoyl phosphate from the ammonia moiety of glutamine, carbonate, and phosphate donated by ATP, constituting the first step of 2 biosynthetic pathways, one leading to arginine and/or urea and the other to pyrimidine nucleotides. The small subunit (glutamine amidotransferase) binds and cleaves glutamine to supply the large subunit with the substrate ammonia. The chain is Carbamoyl phosphate synthase small chain from Helicobacter pylori (strain J99 / ATCC 700824) (Campylobacter pylori J99).